Here is a 209-residue protein sequence, read N- to C-terminus: N-(5'-phosphoribosyl)anthranilate isomerase (209 aa).

It belongs to the TrpF family.

It catalyses the reaction N-(5-phospho-beta-D-ribosyl)anthranilate = 1-(2-carboxyphenylamino)-1-deoxy-D-ribulose 5-phosphate. It participates in amino-acid biosynthesis; L-tryptophan biosynthesis; L-tryptophan from chorismate: step 3/5. This Erythrobacter litoralis (strain HTCC2594) protein is N-(5'-phosphoribosyl)anthranilate isomerase.